The chain runs to 203 residues: MVRLNVKPTRMELNNLKERLKTAERGHKLLKDKRDELMRRFISLIRENNRLRKEVESYLIDNLKSFAVAKSLKNSLMVEELFSIPSKEIELFIEKENIMSVTVPRMHMNITSQNENSEYSYLSSNSEMDDVFATMNSLIDKLLRLAEVEKTCQLMADEIEKTRRRVNGLEYSIIPNLSETIHYIELKLEEAERANLVRIMKVK.

The protein belongs to the V-ATPase D subunit family.

Functionally, produces ATP from ADP in the presence of a proton gradient across the membrane. This chain is V-type ATP synthase subunit D, found in Streptococcus pneumoniae (strain CGSP14).